A 180-amino-acid chain; its full sequence is Translation initiation factor IF-3 (180 aa).

The protein belongs to the IF-3 family. As to quaternary structure, monomer.

It is found in the cytoplasm. In terms of biological role, IF-3 binds to the 30S ribosomal subunit and shifts the equilibrium between 70S ribosomes and their 50S and 30S subunits in favor of the free subunits, thus enhancing the availability of 30S subunits on which protein synthesis initiation begins. The polypeptide is Translation initiation factor IF-3 (Salmonella typhimurium (strain LT2 / SGSC1412 / ATCC 700720)).